The sequence spans 488 residues: ATP synthase subunit beta (488 aa).

164–171 contacts ATP; it reads GGAGVGKT.

This sequence belongs to the ATPase alpha/beta chains family. In terms of assembly, F-type ATPases have 2 components, CF(1) - the catalytic core - and CF(0) - the membrane proton channel. CF(1) has five subunits: alpha(3), beta(3), gamma(1), delta(1), epsilon(1). CF(0) has four main subunits: a(1), b(1), b'(1) and c(9-12).

It localises to the cellular thylakoid membrane. It carries out the reaction ATP + H2O + 4 H(+)(in) = ADP + phosphate + 5 H(+)(out). Functionally, produces ATP from ADP in the presence of a proton gradient across the membrane. The catalytic sites are hosted primarily by the beta subunits. The polypeptide is ATP synthase subunit beta (Prochlorococcus marinus (strain NATL1A)).